A 410-amino-acid chain; its full sequence is Structural protein ORF142 (410 aa).

2 disordered regions span residues 1-24 (MNQN…HVDT) and 156-197 (PTST…VNIS). Acidic residues predominate over residues 161-188 (DDNDNENRSDDDDDDDDYRNDREEVEDS).

It localises to the virion. The sequence is that of Structural protein ORF142 from Trichoplusia ni ascovirus 2c (TnAV-2c).